A 265-amino-acid polypeptide reads, in one-letter code: MSLSVAEKSYLYDSLASTPSIRPDGRLPHQFRPIEIFTDFLPSSNGSSRIIASDGSECIVSIKSKVVDHHVENELLQVDVDIAGQRDDALVVETITSLLNKVLKSGSGVDSSKLQLTKKYSFKIFVDVLVISSHSHPVSLISFAIYSALNSTYLPKLISAFDDLEVEELPTFHDYDMVKLDINPPLVFILAVVGNNMLLDPAANESEVANNGLIISWSNGKITSPIRSVALNDSNVKSFKPHLLKQGLAMVEKYAPDVVRSLENL.

The protein belongs to the RNase PH family. In terms of assembly, component of the RNA exosome complex. Specifically part of the catalytically inactive RNA exosome core complex (Exo-9) which may associate with the catalytic subunits RRP6 and DIS3 in cytoplasmic- and nuclear-specific RNA exosome complex forms. Exo-9 is formed by a hexameric base ring of RNase PH domain-containing subunits and a cap ring consisting of CSL4, RRP4 and RRP40.

It is found in the cytoplasm. The protein resides in the nucleus. Its subcellular location is the nucleolus. Functionally, non-catalytic component of the RNA exosome complex which has 3'-&gt;5' exoribonuclease activity and participates in a multitude of cellular RNA processing and degradation events. In the nucleus, the RNA exosome complex is involved in proper maturation of stable RNA species such as rRNA, snRNA and snoRNA, in the elimination of RNA processing by-products and non-coding 'pervasive' transcripts, such as antisense RNA species and cryptic unstable transcripts (CUTs), and of mRNAs with processing defects, thereby limiting or excluding their export to the cytoplasm. In the cytoplasm, the RNA exosome complex is involved in general mRNA turnover and in RNA surveillance pathways, preventing translation of aberrant mRNAs. The catalytic inactive RNA exosome core complex of 9 subunits (Exo-9) is proposed to play a pivotal role in the binding and presentation of RNA for ribonucleolysis, and to serve as a scaffold for the association with catalytic subunits and accessory proteins or complexes. RRP42 is part of the hexameric ring of RNase PH domain-containing subunits proposed to form a central channel which threads RNA substrates for degradation. The protein is Exosome complex component RRP42 (RRP42) of Saccharomyces cerevisiae (strain ATCC 204508 / S288c) (Baker's yeast).